The chain runs to 358 residues: Serine/threonine-protein phosphatase 2A activator 2 (358 aa).

Belongs to the PTPA-type PPIase family.

It localises to the cytoplasm. It carries out the reaction [protein]-peptidylproline (omega=180) = [protein]-peptidylproline (omega=0). Functionally, PPIases accelerate the folding of proteins. It catalyzes the cis-trans isomerization of proline imidic peptide bonds in oligopeptides. Acts as a regulatory subunit for PP2A-like phosphatases modulating their activity or substrate specificity, probably by inducing a conformational change in the catalytic subunit, a direct target of the PPIase. Can reactivate inactive phosphatase PP2A-phosphatase methylesterase complexes (PP2Ai) in presence of ATP and Mg(2+) by dissociating the inactive form from the complex. The polypeptide is Serine/threonine-protein phosphatase 2A activator 2 (RRD2) (Candida glabrata (strain ATCC 2001 / BCRC 20586 / JCM 3761 / NBRC 0622 / NRRL Y-65 / CBS 138) (Yeast)).